The chain runs to 348 residues: Putative [LysW]-L-2-aminoadipate/[LysW]-L-glutamate phosphate reductase (348 aa).

Position 9-12 (9-12 (SGYV)) interacts with NADP(+). Cys149 is an active-site residue. An NADP(+)-binding site is contributed by Asn315.

The protein belongs to the NAGSA dehydrogenase family. Type 1 subfamily. LysY sub-subfamily.

It localises to the cytoplasm. It carries out the reaction [amino-group carrier protein]-C-terminal-N-(1-carboxy-5-oxopentan-1-yl)-L-glutamine + phosphate + NADP(+) = [amino-group carrier protein]-C-terminal-N-(1-carboxy-5-phosphooxy-5-oxopentan-1-yl)-L-glutamine + NADPH + H(+). The enzyme catalyses [amino-group carrier protein]-C-terminal-gamma-(L-glutamyl-5-semialdehyde)-L-glutamate + phosphate + NADP(+) = [amino-group carrier protein]-C-terminal-gamma-(5-phospho-L-glutamyl)-L-glutamate + NADPH + H(+). The protein operates within amino-acid biosynthesis; L-lysine biosynthesis via AAA pathway; L-lysine from L-alpha-aminoadipate (Thermus route): step 3/5. It participates in amino-acid biosynthesis; L-arginine biosynthesis. Involved in both the arginine and lysine biosynthetic pathways. This chain is Putative [LysW]-L-2-aminoadipate/[LysW]-L-glutamate phosphate reductase, found in Cenarchaeum symbiosum (strain A).